Here is a 750-residue protein sequence, read N- to C-terminus: MIIRSPEPEVKILVDRDPIKTSFEEWAKPGHFSRTIAKGPDTTTWIWNLHADAHDFDSHTSDLEDISRKIFSAHFGQLSIIFLWLSGMYFHGARFSNYEAWLSDPTHIRPSAQVVWPIVGQEILNGDVGGGFRGIQITSGFFQIWRASGITSELQLYCTAIGGLVFAALMLFAGWFHYHKAAPKLAWFQDVESMLNHHLAGLLGLGSLSWAGHQVHVSLPINQFLNAGVDPKEIPLPHEFILNRDLLAQLYPSFAEGATPFFTLNWAKYADFLTFRGGLDPVTGGLWLTDIAHHHLAIAILFLIAGHMYRTNWGIGHGIKDILEAHKGPFTGQGHKGLYEILTTSWHAQLSINLAMLGSLTIIVAHHMYSMPPYPYLATDYGTQLSLFTHHMWIGGFLIVGAAAHAAIFMVRDYDPTTRYNDLLDRVLRHRDAIISHLNWVCIFLGFHSFGLYIHNDTMSALGRPQDMFSDTAIQLQPIFAQWIQNTHALAPGITAPGATTGTSLTWGGGDLVAVGNKVALLPIPLGTADFLVHHIHAFTIHVTVLILLKGVLFARSSRLIPDKANLGFRFPCDGPGRGGTCQVSAWDHVFLGLFWMYNAISVVIFHFSWKMQSDVWGSISDQGVVTHITGGNFAQSSITINGWLRDFLWAQASQVIQSYGSSLSAYGLFFLGAHFVWAFSLMFLFSGRGYWQELIESIVWAHNKLKVAPATQPRALSIVQGRAVGVTHYLLGGIATTWAFFLARIIAVG.

Helical transmembrane passes span 70–93 (IFSAHFGQLSIIFLWLSGMYFHGA), 156–179 (LYCTAIGGLVFAALMLFAGWFHYH), 195–219 (LNHHLAGLLGLGSLSWAGHQVHVSL), 291–309 (IAHHHLAIAILFLIAGHMY), 346–369 (WHAQLSINLAMLGSLTIIVAHHMY), 385–411 (LSLFTHHMWIGGFLIVGAAAHAAIFMV), 433–455 (AIISHLNWVCIFLGFHSFGLYIH), and 531–549 (FLVHHIHAFTIHVTVLILL). [4Fe-4S] cluster is bound by residues cysteine 573 and cysteine 582. The next 2 membrane-spanning stretches (helical) occupy residues 589-610 (HVFLGLFWMYNAISVVIFHFSW) and 664-686 (LSAYGLFFLGAHFVWAFSLMFLF). Residue histidine 675 coordinates chlorophyll a'. Residues methionine 683 and tyrosine 691 each coordinate chlorophyll a. Tryptophan 692 is a binding site for phylloquinone. Residues 724 to 744 (AVGVTHYLLGGIATTWAFFLA) form a helical membrane-spanning segment.

It belongs to the PsaA/PsaB family. The PsaA/B heterodimer binds the P700 chlorophyll special pair and subsequent electron acceptors. PSI consists of a core antenna complex that captures photons, and an electron transfer chain that converts photonic excitation into a charge separation. The eukaryotic PSI reaction center is composed of at least 11 subunits. It depends on P700 is a chlorophyll a/chlorophyll a' dimer, A0 is one or more chlorophyll a, A1 is one or both phylloquinones and FX is a shared 4Fe-4S iron-sulfur center. as a cofactor.

The protein localises to the plastid. It localises to the chloroplast thylakoid membrane. The catalysed reaction is reduced [plastocyanin] + hnu + oxidized [2Fe-2S]-[ferredoxin] = oxidized [plastocyanin] + reduced [2Fe-2S]-[ferredoxin]. Its function is as follows. PsaA and PsaB bind P700, the primary electron donor of photosystem I (PSI), as well as the electron acceptors A0, A1 and FX. PSI is a plastocyanin-ferredoxin oxidoreductase, converting photonic excitation into a charge separation, which transfers an electron from the donor P700 chlorophyll pair to the spectroscopically characterized acceptors A0, A1, FX, FA and FB in turn. Oxidized P700 is reduced on the lumenal side of the thylakoid membrane by plastocyanin. In Lotus japonicus (Lotus corniculatus var. japonicus), this protein is Photosystem I P700 chlorophyll a apoprotein A1.